A 159-amino-acid chain; its full sequence is Nascent polypeptide-associated complex subunit beta (159 aa).

Disordered stretches follow at residues Met-1–Asp-39 and Gln-124–Glu-159. Residues Thr-23–His-32 show a composition bias toward basic residues. Positions Gly-36–Val-101 constitute an NAC-A/B domain. Residues Lys-136–Asn-153 show a composition bias toward acidic residues.

This sequence belongs to the NAC-beta family. As to quaternary structure, part of the nascent polypeptide-associated complex (NAC), consisting of EGD2 and EGD1. NAC associates with ribosomes via EGD1.

The protein resides in the cytoplasm. The protein localises to the nucleus. Component of the nascent polypeptide-associated complex (NAC), a dynamic component of the ribosomal exit tunnel, protecting the emerging polypeptides from interaction with other cytoplasmic proteins to ensure appropriate nascent protein targeting. The NAC complex also promotes mitochondrial protein import by enhancing productive ribosome interactions with the outer mitochondrial membrane and blocks the inappropriate interaction of ribosomes translating non-secretory nascent polypeptides with translocation sites in the membrane of the endoplasmic reticulum. EGD1 may act as a transcription factor that exert a negative effect on the expression of several genes that are transcribed by RNA polymerase II. The polypeptide is Nascent polypeptide-associated complex subunit beta (egd1) (Sclerotinia sclerotiorum (strain ATCC 18683 / 1980 / Ss-1) (White mold)).